We begin with the raw amino-acid sequence, 376 residues long: Alcohol dehydrogenase 6 (376 aa).

7 residues coordinate Zn(2+): Cys-47, His-69, Cys-99, Cys-102, Cys-105, Cys-113, and Cys-175. NAD(+) contacts are provided by residues 200–205 (GLGGVG), Asp-224, Arg-229, 293–295 (VGA), and Arg-371.

It belongs to the zinc-containing alcohol dehydrogenase family. Class-V subfamily. As to quaternary structure, dimer. Zn(2+) is required as a cofactor.

Its subcellular location is the cytoplasm. It carries out the reaction a primary alcohol + NAD(+) = an aldehyde + NADH + H(+). The enzyme catalyses a secondary alcohol + NAD(+) = a ketone + NADH + H(+). Its function is as follows. Alcohol dehydrogenase. Catalyzes the NAD-dependent oxidation of primary alcohols to the corresponding aldehydes. Oxidizes secondary alcohols to the corresponding ketones. In Rattus norvegicus (Rat), this protein is Alcohol dehydrogenase 6 (Adh6).